The primary structure comprises 721 residues: bZIP transcription factor 17 (721 aa).

Disordered stretches follow at residues 1–51 (MAEP…LMSD) and 87–232 (QEQF…EKKR). Residues 1–366 (MAEPITKEQP…KSEAKTKKVA (366 aa)) lie on the Cytoplasmic side of the membrane. Residues 9 to 25 (QPPPPAPDPNSTYPPPS) are compositionally biased toward pro residues. Positions 125-141 (ESPRDSDDRCSGADHNL) are enriched in basic and acidic residues. The segment covering 146 to 170 (PLSSQGSGNCGSDVSEATNESSPKS) has biased composition (polar residues). The span at 204–216 (DESRNSKYRRSGE) shows a compositional bias: basic and acidic residues. One can recognise a bZIP domain in the interval 228 to 288 (DEKKRARLMR…AENATLRQQL (61 aa)). The basic motif stretch occupies residues 230-261 (KKRARLMRNRESAQLSRQRKKHYVEELEEKVR). Residues 267–274 (ITDLNGKI) form a leucine-zipper region. The tract at residues 337 to 359 (PRLKPQNTLGTSKAKKSESKKSE) is disordered. The helical transmembrane segment at 367-387 (SISFLGLLFCLFLFGALAPIV) threads the bilayer. At 388–721 (NVNYGGISGA…RSGAPHLVTT (334 aa)) the chain is on the lumenal side. The segment covering 422–436 (TSRSGAGTGVSNSNG) has biased composition (polar residues). The disordered stretch occupies residues 422–462 (TSRSGAGTGVSNSNGMHRGRDSDRGARKNISATESSVTPGN). Asparagine 450, asparagine 462, asparagine 609, and asparagine 617 each carry an N-linked (GlcNAc...) asparagine glycan. A compositionally biased stretch (polar residues) spans 451 to 462 (ISATESSVTPGN). Positions 627–630 (RRIL) match the RRIL cleavage motif motif. Asparagine 643 and asparagine 651 each carry an N-linked (GlcNAc...) asparagine glycan.

The protein belongs to the bZIP family. Interacts with BZIP28.

The protein localises to the endoplasmic reticulum membrane. It is found in the golgi apparatus membrane. The protein resides in the nucleus. Its function is as follows. Transcriptional activator involved in salt and osmotic stress responses. Functions as a stress sensor and transducer in a signaling pathway that resembles an ER stress response. Following salt stress, BZIP17 is cleaved by SBT6.1 (S1P) and S2P at the C-terminus and the N-terminal bZIP component is translocated to the nucleus, where it activates the expression of salt stress response genes. Functions as a stress sensor and transducer in ER stress signaling pathway. ER stress induces proteolysis of BZIP17 by SBT6.1 (S1P) and S2P, and the N-terminal bZIP component is translocated to the nucleus, where it activates the expression and production of ER chaperones, as well as protein involved in brassinosteroid (BR) signaling, which is required for stress acclimation and growth. The protein is bZIP transcription factor 17 of Arabidopsis thaliana (Mouse-ear cress).